A 600-amino-acid chain; its full sequence is MRLSQMLFVTLREDPAEAEIPSHKLLLRAGYIRRIASGIYAYLPLMWRVLRKVSQIVREEMDATGAQETLLPQLQPAELWQESGRWETYTKAEGIMFSLDDRQQRQLGLGPTHEEVITAVARDLIRSYRQLPQNLYQIQTKFRDEIRPRFGLMRGREFIMKDAYSFHADEESLRQTYAAMDQAYRNIFRRCGLQFRAVEADSGAIGGSASQEFMILADAGEDEILYTEDGRYAANVEKAVSLPAEAIASAFTTFEKRETPGTDTIASLCEFLKADPTQVVKQVLYQAVFDNGKLLPILISIRGDQSVNEIKLTNELTRRAADYGAKTVIALTVPDAEALKKWTAAPLPLGYLGPDLADSAIAVNESIIPKFLRLVDPTAAELQNFVTGANEVNFHVVGANWETNFPKPAVVDLRTALVGDRAQHDSSQVLASARGIEAGHIFQLGLKYSQAMGATFTTENGTEEPLWMGCYGIGVSRVAQAAVEQSYDKDGIIWPVAIAPYQAVVVIPNITDTEQVAAAEKIYADLTAAGIETLLDDRDERAGVKFKDADLIGIPYRIVTGRSLKEGKVEVVQRASKESSVIAVGSVVETVQDWIAAAIV.

The protein belongs to the class-II aminoacyl-tRNA synthetase family. ProS type 1 subfamily. As to quaternary structure, homodimer.

Its subcellular location is the cytoplasm. It carries out the reaction tRNA(Pro) + L-proline + ATP = L-prolyl-tRNA(Pro) + AMP + diphosphate. Its function is as follows. Catalyzes the attachment of proline to tRNA(Pro) in a two-step reaction: proline is first activated by ATP to form Pro-AMP and then transferred to the acceptor end of tRNA(Pro). As ProRS can inadvertently accommodate and process non-cognate amino acids such as alanine and cysteine, to avoid such errors it has two additional distinct editing activities against alanine. One activity is designated as 'pretransfer' editing and involves the tRNA(Pro)-independent hydrolysis of activated Ala-AMP. The other activity is designated 'posttransfer' editing and involves deacylation of mischarged Ala-tRNA(Pro). The misacylated Cys-tRNA(Pro) is not edited by ProRS. The sequence is that of Proline--tRNA ligase from Synechococcus elongatus (strain ATCC 33912 / PCC 7942 / FACHB-805) (Anacystis nidulans R2).